A 309-amino-acid polypeptide reads, in one-letter code: Homoserine O-succinyltransferase (309 aa).

Catalysis depends on Cys-142, which acts as the Acyl-thioester intermediate. Lys-163 and Ser-192 together coordinate substrate. His-235 serves as the catalytic Proton acceptor. The active site involves Glu-237. Arg-249 lines the substrate pocket.

It belongs to the MetA family. As to quaternary structure, homodimer.

It is found in the cytoplasm. It catalyses the reaction L-homoserine + succinyl-CoA = O-succinyl-L-homoserine + CoA. Its pathway is amino-acid biosynthesis; L-methionine biosynthesis via de novo pathway; O-succinyl-L-homoserine from L-homoserine: step 1/1. In terms of biological role, transfers a succinyl group from succinyl-CoA to L-homoserine, forming succinyl-L-homoserine. This chain is Homoserine O-succinyltransferase, found in Salmonella choleraesuis (strain SC-B67).